A 297-amino-acid polypeptide reads, in one-letter code: MKVNGVEIEDTFAEAFDIKVSRILVTAASKRLAKIAAREATGYGTSVIGCPAEAGIDTYIPPKNTPDQRPGFTIIICNPSKKKLDHELLERVGMTILTAPTAAAFDALENAEEKVNTGFKLKFFGDGYEKEGEVQGRKVHIIPIMSGEFIVEEKFGIKSGVAGGNFFIMAETQGSALLAAEMAVDAIKSVEGVMTPFPGGIVASGSKVGSKKYDFLDASTNEKMCVTLKDEIEDSEVPEDVNGIYEIVIDGIDEESVKKAMKVGIEAACKVPGVKKISAGNYGGKLGKYKLHLHDLF.

The protein belongs to the FTR family. In terms of assembly, homotetramer.

The protein localises to the cytoplasm. The catalysed reaction is N-formylmethanofuran + 5,6,7,8-tetrahydromethanopterin + H(+) = N(5)-formyl-5,6,7,8-tetrahydromethanopterin + methanofuran. Its pathway is one-carbon metabolism; methanogenesis from CO(2); 5,10-methenyl-5,6,7,8-tetrahydromethanopterin from CO(2): step 2/3. Functionally, catalyzes the reversible transfer of a formyl group from formylmethanofuran (formyl-MFR) to tetrahydromethanopterin (H(4)MPT) to produce 5-formyl tetrahydromethanopterin (5-formyl-H(4)MPT) and methanofuran (MFR). The protein is Formylmethanofuran--tetrahydromethanopterin formyltransferase of Methanothermus fervidus (strain ATCC 43054 / DSM 2088 / JCM 10308 / V24 S).